A 541-amino-acid chain; its full sequence is Chaperonin GroEL 2 (541 aa).

ATP contacts are provided by residues 29-32 (TLGP), 86-90 (DGTTT), Gly-413, 476-478 (NAA), and Asp-492.

The protein belongs to the chaperonin (HSP60) family. In terms of assembly, forms a cylinder of 14 subunits composed of two heptameric rings stacked back-to-back. Interacts with the co-chaperonin GroES.

Its subcellular location is the cytoplasm. The enzyme catalyses ATP + H2O + a folded polypeptide = ADP + phosphate + an unfolded polypeptide.. Its function is as follows. Together with its co-chaperonin GroES, plays an essential role in assisting protein folding. The GroEL-GroES system forms a nano-cage that allows encapsulation of the non-native substrate proteins and provides a physical environment optimized to promote and accelerate protein folding. The protein is Chaperonin GroEL 2 of Streptomyces coelicolor (strain ATCC BAA-471 / A3(2) / M145).